The sequence spans 780 residues: Protein AMEIOTIC 1 (780 aa).

Disordered regions lie at residues 32-60 (KKKTSSSHSRNGKDDVNHDSTIQPRSPLS) and 237-327 (APKE…RWSA). Over residues 50-60 (DSTIQPRSPLS) the composition is skewed to polar residues. Composition is skewed to basic and acidic residues over residues 263-291 (EVKRSERNCKRKREAEASSKDNNGDEGKK) and 309-327 (RTVESKDGDPRHGKDRWSA). Residues 448 to 547 (VEELTEEVNG…LEEQVTYLSS (100 aa)) adopt a coiled-coil conformation.

It localises to the nucleus. The protein resides in the chromosome. Functionally, plays a fundamental role in building the proper chromosome structure at the beginning of meiosis in male meiocytes. Required for the transition from leptotene to zygotene in meiocytes. Required for homologous chromosome pairing, and initiation and progression of meiotic recombination. Regulates meiocyte cytoskeleton organization. This chain is Protein AMEIOTIC 1, found in Zea mays (Maize).